The following is a 107-amino-acid chain: Histone H4 (107 aa).

The segment covering 1–16 (MPGRGKGGKGGKGYGK) has biased composition (gly residues). The disordered stretch occupies residues 1–23 (MPGRGKGGKGGKGYGKVGAKRHA). The DNA-binding element occupies 17–21 (VGAKR).

Belongs to the histone H4 family. As to quaternary structure, the nucleosome is a histone octamer containing two molecules each of H2A, H2B, H3 and H4 assembled in one H3-H4 heterotetramer and two H2A-H2B heterodimers. The octamer wraps approximately 147 bp of DNA.

The protein localises to the nucleus. The protein resides in the chromosome. Core component of nucleosome. Nucleosomes wrap and compact DNA into chromatin, limiting DNA accessibility to the cellular machineries which require DNA as a template. Histones thereby play a central role in transcription regulation, DNA repair, DNA replication and chromosomal stability. DNA accessibility is regulated via a complex set of post-translational modifications of histones, also called histone code, and nucleosome remodeling. This chain is Histone H4, found in Euplotes crassus.